The sequence spans 769 residues: ATP-dependent RNA helicase DBP7 (769 aa).

2 disordered regions span residues 38–107 (AVKR…DRKS) and 127–150 (VAST…NAPL). Low complexity predominate over residues 55–68 (NSNNPQNPNKINVP). Positions 155 to 184 (DTFTSLGLSPSLATHLLTKLNLKTPTAIQK) match the Q motif motif. One can recognise a Helicase ATP-binding domain in the interval 188-389 (TQLLKEECDA…EISLKEAIHI (202 aa)). 201–208 (AQTGSGKT) provides a ligand contact to ATP. The short motif at 325–328 (DEGD) is the DEAD box element. 3 disordered regions span residues 391 to 411 (ADPA…EFSA), 471 to 490 (SEEL…NVHG), and 705 to 769 (VPGL…FNIA). The region spanning 430–622 (TLTALLKRTF…EVNEILKRGF (193 aa)) is the Helicase C-terminal domain. Residues 472 to 481 (EELPDADDEN) are compositionally biased toward acidic residues. Composition is skewed to basic and acidic residues over residues 711 to 739 (GNED…REDS) and 746 to 760 (AEAR…KEHM).

It belongs to the DEAD box helicase family. DDX31/DBP7 subfamily.

It is found in the nucleus. It localises to the nucleolus. It catalyses the reaction ATP + H2O = ADP + phosphate + H(+). Functionally, ATP-binding RNA helicase involved in the biogenesis of 60S ribosomal subunits and is required for the normal formation of 25S and 5.8S rRNAs. This is ATP-dependent RNA helicase DBP7 (DBP7) from Coccidioides immitis (strain RS) (Valley fever fungus).